The chain runs to 426 residues: MNALNIAEYTHTLGLQAKTASAQMARAPAAIKNKALLALARLLRQNVDALQGDNARDLERARAAGLAEPMVDRLKLTPKVLETCAQGCEQLAAMPDIIGEIQGMKQQPSGIRVGQMRVPIGVFGMIYESRPNVTIEAASLSIKSGNACILRGGSEAIDSNKALARLVAQALAEAGLPEHGVQLVQTTDRAAVGQLIAMPQYVDVIIPRGGKGLIERISAEAKVPVIKHLDGNCHTYVDDPCDIVMAVQVADNAKTQKYSPCNASEGLLVARGVAAQFLPQIGAVYAAKGVEMRGCPEALAILRAVPGVQLAEATEADWSEEYLAPIISVKVVAGVDEAIAHINRYGSHHTDAILTRDHMHAQQFLRDVDSASVMVNASTRFADGFEYGLGAEIGISTDKFHARGPVGIEGLTSLKWVVLGEGEVRT.

Belongs to the gamma-glutamyl phosphate reductase family.

The protein localises to the cytoplasm. It catalyses the reaction L-glutamate 5-semialdehyde + phosphate + NADP(+) = L-glutamyl 5-phosphate + NADPH + H(+). Its pathway is amino-acid biosynthesis; L-proline biosynthesis; L-glutamate 5-semialdehyde from L-glutamate: step 2/2. Its function is as follows. Catalyzes the NADPH-dependent reduction of L-glutamate 5-phosphate into L-glutamate 5-semialdehyde and phosphate. The product spontaneously undergoes cyclization to form 1-pyrroline-5-carboxylate. This Acidovorax ebreus (strain TPSY) (Diaphorobacter sp. (strain TPSY)) protein is Gamma-glutamyl phosphate reductase.